Here is a 227-residue protein sequence, read N- to C-terminus: Cytochrome c oxidase subunit 2 (227 aa).

The Mitochondrial intermembrane portion of the chain corresponds to 1–14 (MAYPFQLGLQDATS). A helical transmembrane segment spans residues 15–45 (PIMEELTNFHDHTLMIVFLISSLVLYIISLM). Residues 46 to 59 (LTTKLTHTNTMDAQ) lie on the Mitochondrial matrix side of the membrane. A helical transmembrane segment spans residues 60-87 (EVETIWTILPAVILILIALPSLRILYMM). Over 88-227 (DEINNPALTV…HFENWSASMI (140 aa)) the chain is Mitochondrial intermembrane. Positions 161, 196, 198, 200, 204, and 207 each coordinate Cu cation. Glu-198 contributes to the Mg(2+) binding site.

Belongs to the cytochrome c oxidase subunit 2 family. Component of the cytochrome c oxidase (complex IV, CIV), a multisubunit enzyme composed of 14 subunits. The complex is composed of a catalytic core of 3 subunits MT-CO1, MT-CO2 and MT-CO3, encoded in the mitochondrial DNA, and 11 supernumerary subunits COX4I, COX5A, COX5B, COX6A, COX6B, COX6C, COX7A, COX7B, COX7C, COX8 and NDUFA4, which are encoded in the nuclear genome. The complex exists as a monomer or a dimer and forms supercomplexes (SCs) in the inner mitochondrial membrane with NADH-ubiquinone oxidoreductase (complex I, CI) and ubiquinol-cytochrome c oxidoreductase (cytochrome b-c1 complex, complex III, CIII), resulting in different assemblies (supercomplex SCI(1)III(2)IV(1) and megacomplex MCI(2)III(2)IV(2)). Found in a complex with TMEM177, COA6, COX18, COX20, SCO1 and SCO2. Interacts with TMEM177 in a COX20-dependent manner. Interacts with COX20. Interacts with COX16. The cofactor is Cu cation.

Its subcellular location is the mitochondrion inner membrane. It carries out the reaction 4 Fe(II)-[cytochrome c] + O2 + 8 H(+)(in) = 4 Fe(III)-[cytochrome c] + 2 H2O + 4 H(+)(out). Functionally, component of the cytochrome c oxidase, the last enzyme in the mitochondrial electron transport chain which drives oxidative phosphorylation. The respiratory chain contains 3 multisubunit complexes succinate dehydrogenase (complex II, CII), ubiquinol-cytochrome c oxidoreductase (cytochrome b-c1 complex, complex III, CIII) and cytochrome c oxidase (complex IV, CIV), that cooperate to transfer electrons derived from NADH and succinate to molecular oxygen, creating an electrochemical gradient over the inner membrane that drives transmembrane transport and the ATP synthase. Cytochrome c oxidase is the component of the respiratory chain that catalyzes the reduction of oxygen to water. Electrons originating from reduced cytochrome c in the intermembrane space (IMS) are transferred via the dinuclear copper A center (CU(A)) of subunit 2 and heme A of subunit 1 to the active site in subunit 1, a binuclear center (BNC) formed by heme A3 and copper B (CU(B)). The BNC reduces molecular oxygen to 2 water molecules using 4 electrons from cytochrome c in the IMS and 4 protons from the mitochondrial matrix. This chain is Cytochrome c oxidase subunit 2 (MT-CO2), found in Sundamys muelleri (Mueller's giant sunda rat).